A 476-amino-acid polypeptide reads, in one-letter code: Protein transport protein Sec61 subunit alpha isoform 1 (476 aa).

Over 1–33 (MGIKFLEVIKPFCVILPEIQKPERKIQFKEKVL) the chain is Cytoplasmic. A helical transmembrane segment spans residues 34–53 (WTAITLFIFLVCCQIPLFGI). Residues 54-76 (MSSDSADPFYWMRVILASNRGTL) lie on the Lumenal side of the membrane. Residues 77 to 96 (MELGISPIVTSGLIMQLLAG) form a helical membrane-spanning segment. Topologically, residues 97–117 (AKIIEVGDTPKDRALFNGAQK) are cytoplasmic. Residues 118–138 (LFGMTITIGQSIVYVMTGMYG) form a helical membrane-spanning segment. Residues 139–144 (DPSEMG) lie on the Lumenal side of the membrane. The chain crosses the membrane as a helical span at residues 145–165 (AGVCLLITIQLFVAGLIVLLL). Over 166–172 (DELLQKG) the chain is Cytoplasmic. Residues 173 to 193 (YGLGSGISLFIATNICETIVW) traverse the membrane as a helical segment. The Lumenal segment spans residues 194–240 (KAFSPTTVNTGRGMEFEGAIIALFHLLATRTDKVRALREAFYRQNLP). A helical membrane pass occupies residues 241–261 (NLMNLIATIFVFAVVIYFQGF). Residues 262-288 (RVDLPIKSARYRGQYNTYPIKLFYTSN) lie on the Cytoplasmic side of the membrane. Residues 289 to 309 (IPIILQSALVSNLYVISQMLS) form a helical membrane-spanning segment. The Lumenal segment spans residues 310 to 354 (ARFSGNLLVSLLGTWSDTSSGGPARAYPVGGLCYYLSPPESFGSV). Residues 355–375 (LEDPVHAVVYIVFMLGSCAFF) traverse the membrane as a helical segment. Residues 376–420 (SKTWIEVSGSSAKDVAKQLKEQQMVMRGHRETSMVHELNRYIPTA) lie on the Cytoplasmic side of the membrane. Residues 421-441 (AAFGGLCIGALSVLADFLGAI) traverse the membrane as a helical segment. The Lumenal portion of the chain corresponds to 442 to 445 (GSGT). Residues 446 to 462 (GILLAVTIIYQYFEIFV) form a helical membrane-spanning segment. Over 463–476 (KEQSEVGSMGALLF) the chain is Cytoplasmic.

It belongs to the SecY/SEC61-alpha family. The SEC61 channel-forming translocon complex consists of channel-forming core components SEC61A1, SEC61B and SEC61G and different auxiliary components such as SEC62 and SEC63. The SEC61 channel associates with the multi-pass translocon (MPT) complex.

The protein resides in the endoplasmic reticulum membrane. In terms of biological role, component of SEC61 channel-forming translocon complex that mediates transport of signal peptide-containing precursor polypeptides across the endoplasmic reticulum (ER). Forms a ribosome receptor and a gated pore in the ER membrane, both functions required for cotranslational translocation of nascent polypeptides. May cooperate with auxiliary protein SEC62, SEC63 and HSPA5/BiP to enable post-translational transport of small presecretory proteins. The SEC61 channel is also involved in ER membrane insertion of transmembrane proteins: it mediates membrane insertion of the first few transmembrane segments of proteins, while insertion of subsequent transmembrane regions of multi-pass membrane proteins is mediated by the multi-pass translocon (MPT) complex. The SEC61 channel cooperates with the translocating protein TRAM1 to import nascent proteins into the ER. Controls the passive efflux of calcium ions from the ER lumen to the cytosol through SEC61 channel, contributing to the maintenance of cellular calcium homeostasis. Plays a critical role in nephrogenesis, specifically at pronephros stage. This chain is Protein transport protein Sec61 subunit alpha isoform 1 (SEC61A1), found in Bos taurus (Bovine).